The primary structure comprises 122 residues: Small ribosomal subunit protein uS13 (122 aa).

The disordered stretch occupies residues 93–122 (RLSLPVRGQRTKTNSRTRKGKRKTVAGKKK). Residues 101-122 (QRTKTNSRTRKGKRKTVAGKKK) show a composition bias toward basic residues.

Belongs to the universal ribosomal protein uS13 family. Part of the 30S ribosomal subunit. Forms a loose heterodimer with protein S19. Forms two bridges to the 50S subunit in the 70S ribosome.

Its function is as follows. Located at the top of the head of the 30S subunit, it contacts several helices of the 16S rRNA. In the 70S ribosome it contacts the 23S rRNA (bridge B1a) and protein L5 of the 50S subunit (bridge B1b), connecting the 2 subunits; these bridges are implicated in subunit movement. Contacts the tRNAs in the A and P-sites. This is Small ribosomal subunit protein uS13 from Chlamydia caviae (strain ATCC VR-813 / DSM 19441 / 03DC25 / GPIC) (Chlamydophila caviae).